The chain runs to 257 residues: Imidazole glycerol phosphate synthase subunit HisF (257 aa).

Active-site residues include Asp-12 and Asp-131.

This sequence belongs to the HisA/HisF family. As to quaternary structure, heterodimer of HisH and HisF.

Its subcellular location is the cytoplasm. The enzyme catalyses 5-[(5-phospho-1-deoxy-D-ribulos-1-ylimino)methylamino]-1-(5-phospho-beta-D-ribosyl)imidazole-4-carboxamide + L-glutamine = D-erythro-1-(imidazol-4-yl)glycerol 3-phosphate + 5-amino-1-(5-phospho-beta-D-ribosyl)imidazole-4-carboxamide + L-glutamate + H(+). It participates in amino-acid biosynthesis; L-histidine biosynthesis; L-histidine from 5-phospho-alpha-D-ribose 1-diphosphate: step 5/9. In terms of biological role, IGPS catalyzes the conversion of PRFAR and glutamine to IGP, AICAR and glutamate. The HisF subunit catalyzes the cyclization activity that produces IGP and AICAR from PRFAR using the ammonia provided by the HisH subunit. The chain is Imidazole glycerol phosphate synthase subunit HisF from Rhodococcus erythropolis (strain PR4 / NBRC 100887).